Here is a 329-residue protein sequence, read N- to C-terminus: Apolipoprotein E (329 aa).

The first 18 residues, 1–18 (MKVLWAALVVALLAGCWA), serve as a signal peptide directing secretion. Repeat copies occupy residues 92–113 (TLMEETMKEIKAYRAELEEQLG), 114–135 (PMASETQARVAKELQAAQARLR), 136–157 (SDMEDVRTRLSQYRGEVQAMLG), 158–179 (QSTEELRARFASHMRKLRKRVL), 180–201 (RDAEDLQKRLAVYRAGVREGAE), 202–223 (RSVSTIRERLWPLLEQARTRHA), 224–245 (KVDALATQPLRERVNALGQQLR), and 246–267 (GRLEEMGSRARSHLDEVREQME). Residues 92–267 (TLMEETMKEI…HLDEVREQME (176 aa)) form an 8 X 22 AA approximate tandem repeats region. Met155 bears the Methionine sulfoxide mark. Ser159 bears the Phosphoserine mark. The segment at 170–180 (HMRKLRKRVLR) is LDL and other lipoprotein receptors binding. Heparin is bound at residue 174 to 177 (LRKR). Positions 222 to 302 (HAKVDALATQ…GWFEPLVEDM (81 aa)) are lipid-binding and lipoprotein association. 241-248 (GQQLRGRL) contributes to the heparin binding site. The interval 278-329 (NQMRQQAEPFQARLKGWFEPLVEDMQRQWAVLVEKVQAAVGTSPTTPPVETK) is homooligomerization. A specificity for association with VLDL region spans residues 290 to 302 (RLKGWFEPLVEDM).

It belongs to the apolipoprotein A1/A4/E family. In terms of assembly, homotetramer. May interact with ABCA1; functionally associated with ABCA1 in the biogenesis of HDLs. May interact with APP/A4 amyloid-beta peptide; the interaction is extremely stable in vitro but its physiological significance is unclear. May interact with MAPT. May interact with MAP2. In the cerebrospinal fluid, interacts with secreted SORL1. Interacts with PMEL; this allows the loading of PMEL luminal fragment on ILVs to induce fibril nucleation. In terms of processing, APOE exists as multiple glycosylated and sialylated glycoforms within cells and in plasma. The extent of glycosylation and sialylation are tissue and context specific. Post-translationally, glycated in plasma VLDL. Phosphorylated by FAM20C in the extracellular medium.

Its subcellular location is the secreted. It is found in the extracellular space. It localises to the extracellular matrix. The protein localises to the extracellular vesicle. The protein resides in the endosome. Its subcellular location is the multivesicular body. Its function is as follows. APOE is an apolipoprotein, a protein associating with lipid particles, that mainly functions in lipoprotein-mediated lipid transport between organs via the plasma and interstitial fluids. APOE is a core component of plasma lipoproteins and is involved in their production, conversion and clearance. Apolipoproteins are amphipathic molecules that interact both with lipids of the lipoprotein particle core and the aqueous environment of the plasma. As such, APOE associates with chylomicrons, chylomicron remnants, very low density lipoproteins (VLDL) and intermediate density lipoproteins (IDL) but shows a preferential binding to high-density lipoproteins (HDL). It also binds a wide range of cellular receptors including the LDL receptor/LDLR, the LDL receptor-related proteins LRP1, LRP2 and LRP8 and the very low-density lipoprotein receptor/VLDLR that mediate the cellular uptake of the APOE-containing lipoprotein particles. Finally, APOE also has a heparin-binding activity and binds heparan-sulfate proteoglycans on the surface of cells, a property that supports the capture and the receptor-mediated uptake of APOE-containing lipoproteins by cells. A main function of APOE is to mediate lipoprotein clearance through the uptake of chylomicrons, VLDLs, and HDLs by hepatocytes. APOE is also involved in the biosynthesis by the liver of VLDLs as well as their uptake by peripheral tissues ensuring the delivery of triglycerides and energy storage in muscle, heart and adipose tissues. By participating in the lipoprotein-mediated distribution of lipids among tissues, APOE plays a critical role in plasma and tissues lipid homeostasis. APOE is also involved in two steps of reverse cholesterol transport, the HDLs-mediated transport of cholesterol from peripheral tissues to the liver, and thereby plays an important role in cholesterol homeostasis. First, it is functionally associated with ABCA1 in the biogenesis of HDLs in tissues. Second, it is enriched in circulating HDLs and mediates their uptake by hepatocytes. APOE also plays an important role in lipid transport in the central nervous system, regulating neuron survival and sprouting. This chain is Apolipoprotein E (APOE), found in Arctocephalus gazella (Antarctic fur seal).